The sequence spans 336 residues: Glycerol-3-phosphate dehydrogenase [NAD(P)+] (336 aa).

NADPH contacts are provided by Ser-13, Trp-14, Arg-34, and Lys-108. Lys-108, Gly-138, and Ser-140 together coordinate sn-glycerol 3-phosphate. Ala-142 serves as a coordination point for NADPH. Residues Lys-193, Asp-246, Ser-256, Arg-257, and Asn-258 each coordinate sn-glycerol 3-phosphate. Catalysis depends on Lys-193, which acts as the Proton acceptor. Arg-257 provides a ligand contact to NADPH. NADPH-binding residues include Val-281 and Glu-283.

This sequence belongs to the NAD-dependent glycerol-3-phosphate dehydrogenase family.

It is found in the cytoplasm. The enzyme catalyses sn-glycerol 3-phosphate + NAD(+) = dihydroxyacetone phosphate + NADH + H(+). The catalysed reaction is sn-glycerol 3-phosphate + NADP(+) = dihydroxyacetone phosphate + NADPH + H(+). The protein operates within membrane lipid metabolism; glycerophospholipid metabolism. In terms of biological role, catalyzes the reduction of the glycolytic intermediate dihydroxyacetone phosphate (DHAP) to sn-glycerol 3-phosphate (G3P), the key precursor for phospholipid synthesis. This is Glycerol-3-phosphate dehydrogenase [NAD(P)+] from Carboxydothermus hydrogenoformans (strain ATCC BAA-161 / DSM 6008 / Z-2901).